A 1679-amino-acid chain; its full sequence is Protein MLP2 (1679 aa).

4 coiled-coil regions span residues 32–176, 233–466, 516–1064, and 1099–1491; these read AKFE…KYDT, YNKF…RQVK, FSNV…EREL, and KLVS…ENAG. Short sequence motifs (bipartite nuclear localization signal) lie at residues 417–433, 639–655, and 1433–1449; these read KRST…KRKQ, RKEL…KKTT, and KKEW…RRIK. Disordered stretches follow at residues 1495–1521 and 1632–1679; these read FLDN…SERP and DLTN…ASNE. 2 stretches are compositionally biased toward polar residues: residues 1511–1520 and 1646–1661; these read NSPSKGNSER and IGST…TSSD. Phosphoserine is present on Ser1512. The span at 1662–1671 shows a compositional bias: basic and acidic residues; the sequence is PDTKKVKESP. Ser1670 is modified (phosphoserine).

As to quaternary structure, component of the nuclear complex (NPC). NPC constitutes the exclusive means of nucleocytoplasmic transport. NPCs allow the passive diffusion of ions and small molecules and the active, nuclear transport receptor-mediated bidirectional transport of macromolecules such as proteins, RNAs, ribonucleoparticles (RNPs), and ribosomal subunits across the nuclear envelope. Due to its 8-fold rotational symmetry, all subunits are present with 8 copies or multiples thereof. Interacts with NUP60 and NIC96, which tether it to the nuclear pore complex. Component of the spindle pole body core in which it interacts directly with SPC110, SPC42 and SPC29. Also interacts with YKU70 (HDF1) and MLP1.

It localises to the nucleus. Its subcellular location is the cytoplasm. It is found in the cytoskeleton. The protein resides in the microtubule organizing center. The protein localises to the spindle pole body. It localises to the nuclear pore complex. Its function is as follows. Together with the closely related MLP1, involved in the structural and functional organization of perinuclear chromatin. MLP1/MLP2 associate with the nuclear pore complex and form filamentous structures along the nuclear periphery. Has a role in the localization of Esc1 to nucleolar regions. Together with MLP1, mediates tethering of the some telomeres to the nuclear periphery, probably mediated by YKU70/YKU80 (HDF1/HDF2) heterodimer and show perinuclear location dependent silencing. MLP1 and MLP2 are involved in telomere length regulation but not silencing or telomere anchoring. Plays a role in the incorporation of components into the spindle pole body. Involved in double-strand break repair, probably also mediated by the YKU70/YKU80 (HDF1/HDF2) heterodimer. The protein is Protein MLP2 (MLP2) of Saccharomyces cerevisiae (strain ATCC 204508 / S288c) (Baker's yeast).